The chain runs to 266 residues: Type III pantothenate kinase (266 aa).

Glutamate 15–serine 22 contacts ATP. Substrate-binding positions include tyrosine 105 and glycine 112 to arginine 115. Catalysis depends on aspartate 114, which acts as the Proton acceptor. Aspartate 135 contributes to the K(+) binding site. An ATP-binding site is contributed by threonine 138. Residue threonine 191 participates in substrate binding.

This sequence belongs to the type III pantothenate kinase family. Homodimer. The cofactor is NH4(+). Requires K(+) as cofactor.

The protein resides in the cytoplasm. The enzyme catalyses (R)-pantothenate + ATP = (R)-4'-phosphopantothenate + ADP + H(+). The protein operates within cofactor biosynthesis; coenzyme A biosynthesis; CoA from (R)-pantothenate: step 1/5. Its function is as follows. Catalyzes the phosphorylation of pantothenate (Pan), the first step in CoA biosynthesis. This chain is Type III pantothenate kinase, found in Chlorobium chlorochromatii (strain CaD3).